Reading from the N-terminus, the 632-residue chain is tRNA uridine 5-carboxymethylaminomethyl modification enzyme MnmG (632 aa).

FAD contacts are provided by residues 13–18, V125, and S180; that span reads GGGHAG. 273 to 287 is a binding site for NAD(+); that stretch reads GPRYCPSIEDKVMRF. Residue Q370 participates in FAD binding.

The protein belongs to the MnmG family. Homodimer. Heterotetramer of two MnmE and two MnmG subunits. It depends on FAD as a cofactor.

Its subcellular location is the cytoplasm. Functionally, NAD-binding protein involved in the addition of a carboxymethylaminomethyl (cmnm) group at the wobble position (U34) of certain tRNAs, forming tRNA-cmnm(5)s(2)U34. The protein is tRNA uridine 5-carboxymethylaminomethyl modification enzyme MnmG of Vibrio vulnificus (strain CMCP6).